A 274-amino-acid chain; its full sequence is tRNA uridine(34) hydroxylase (274 aa).

The 97-residue stretch at 121 to 217 (SRSDVYTIDT…YFKSTKNTNN (97 aa)) folds into the Rhodanese domain. Cys-177 (cysteine persulfide intermediate) is an active-site residue.

Belongs to the TrhO family.

It carries out the reaction uridine(34) in tRNA + AH2 + O2 = 5-hydroxyuridine(34) in tRNA + A + H2O. Catalyzes oxygen-dependent 5-hydroxyuridine (ho5U) modification at position 34 in tRNAs. In Ehrlichia canis (strain Jake), this protein is tRNA uridine(34) hydroxylase.